The following is a 392-amino-acid chain: Succinate--CoA ligase [ADP-forming] subunit beta (392 aa).

The ATP-grasp domain occupies 9 to 248; that stretch reads KEILRGFGVT…TSEEDPLEVE (240 aa). ATP-binding positions include K50, 57-59, E103, M106, and E111; that span reads GRG. 2 residues coordinate Mg(2+): N203 and D217. Residues N268 and 325 to 327 each bind substrate; that span reads GIV.

It belongs to the succinate/malate CoA ligase beta subunit family. Heterotetramer of two alpha and two beta subunits. Mg(2+) serves as cofactor.

The enzyme catalyses succinate + ATP + CoA = succinyl-CoA + ADP + phosphate. It catalyses the reaction GTP + succinate + CoA = succinyl-CoA + GDP + phosphate. The protein operates within carbohydrate metabolism; tricarboxylic acid cycle; succinate from succinyl-CoA (ligase route): step 1/1. Functionally, succinyl-CoA synthetase functions in the citric acid cycle (TCA), coupling the hydrolysis of succinyl-CoA to the synthesis of either ATP or GTP and thus represents the only step of substrate-level phosphorylation in the TCA. The beta subunit provides nucleotide specificity of the enzyme and binds the substrate succinate, while the binding sites for coenzyme A and phosphate are found in the alpha subunit. The protein is Succinate--CoA ligase [ADP-forming] subunit beta of Chloroherpeton thalassium (strain ATCC 35110 / GB-78).